The following is a 158-amino-acid chain: Transcription elongation factor GreA (158 aa).

Positions 49–69 (SEYESAKDEQAFVEGRISQIE) form a coiled coil. Residues 102 to 125 (EEPESYTIVGESESDPLSGKISNE) are disordered.

This sequence belongs to the GreA/GreB family.

Functionally, necessary for efficient RNA polymerase transcription elongation past template-encoded arresting sites. The arresting sites in DNA have the property of trapping a certain fraction of elongating RNA polymerases that pass through, resulting in locked ternary complexes. Cleavage of the nascent transcript by cleavage factors such as GreA or GreB allows the resumption of elongation from the new 3'terminus. GreA releases sequences of 2 to 3 nucleotides. This chain is Transcription elongation factor GreA, found in Limosilactobacillus fermentum (strain NBRC 3956 / LMG 18251) (Lactobacillus fermentum).